The chain runs to 164 residues: Ubiquitin-conjugating enzyme E2 2 (164 aa).

A UBC core domain is found at Pro-4–Glu-150. Cys-88 (glycyl thioester intermediate) is an active-site residue.

This sequence belongs to the ubiquitin-conjugating enzyme family.

The protein localises to the cytoplasm. It is found in the nucleus. It carries out the reaction S-ubiquitinyl-[E1 ubiquitin-activating enzyme]-L-cysteine + [E2 ubiquitin-conjugating enzyme]-L-cysteine = [E1 ubiquitin-activating enzyme]-L-cysteine + S-ubiquitinyl-[E2 ubiquitin-conjugating enzyme]-L-cysteine.. The protein operates within protein modification; protein ubiquitination. In terms of biological role, catalyzes the covalent attachment of ubiquitin to other proteins. Plays a role in transcription regulation by catalyzing the monoubiquitination of histone H2B to form H2BK123ub1. H2BK123ub1 gives a specific tag for epigenetic transcriptional activation and is also a prerequisite for H3K4me and H3K79me formation. Also involved in postreplication repair of UV-damaged DNA, in N-end rule-dependent protein degradation and in sporulation. This chain is Ubiquitin-conjugating enzyme E2 2 (UBC2), found in Kluyveromyces lactis (strain ATCC 8585 / CBS 2359 / DSM 70799 / NBRC 1267 / NRRL Y-1140 / WM37) (Yeast).